The chain runs to 402 residues: MQPALNAFTEQPADTAEATSRAGLEQAFALFNQMSSQLSESYSLLEERVTELKGQLALVSAQRMEELAEKERLANRLQSLLDLLPGGVIVIDAHGVVREANPAALGLLGEPLVGMLWREVIARCFAPREDDGHEISLRDGRRLSIATRSLNGEPGQLILLNDLTDTRRLQEQLARHERLSALGRMVASLAHQIRTPLSAALLYAGHLSEQALPTDQQQRFAGRLKERLHELEHQVRDMLVFARGELPLTDRVAPKALFDSLRAAAEVHVQGLQVRWQCEARGGELLCNRDTLVGTVLNLVENAIQACGPELRLKVHLYARADSLRLSVSDNGPGMDPATLARLGEPFFTTKTTGTGLGLAVVKAVARAHQGQLQLRSRPGRGTCATLILPLIPAAPLSAIQE.

Positions 188-393 constitute a Histidine kinase domain; sequence SLAHQIRTPL…CATLILPLIP (206 aa). Position 191 is a phosphohistidine; by autocatalysis (His191).

It carries out the reaction ATP + protein L-histidine = ADP + protein N-phospho-L-histidine.. Its function is as follows. Member of the two-component regulatory system FleS/FleR that regulates the expression of multiple genes involved in flagellar synthesis, adhesion, swarming, motility and antibiotic resistance. May function as a membrane-associated protein kinase that phosphorylates FleR in response to environmental signals leading to activation of specific gene promoters. In Pseudomonas aeruginosa (strain ATCC 15692 / DSM 22644 / CIP 104116 / JCM 14847 / LMG 12228 / 1C / PRS 101 / PAO1), this protein is Sensor protein kinase FleS (fleS).